We begin with the raw amino-acid sequence, 412 residues long: Peptidase T (412 aa).

A Zn(2+)-binding site is contributed by H81. D83 is an active-site residue. D144 contacts Zn(2+). E178 acts as the Proton acceptor in catalysis. Residues E179, D201, and H383 each contribute to the Zn(2+) site.

The protein belongs to the peptidase M20B family. Requires Zn(2+) as cofactor.

The protein localises to the cytoplasm. The catalysed reaction is Release of the N-terminal residue from a tripeptide.. Its function is as follows. Cleaves the N-terminal amino acid of tripeptides. This is Peptidase T from Bacillus cereus (strain ZK / E33L).